Consider the following 66-residue polypeptide: UPF0434 protein M446_0487 (66 aa).

It belongs to the UPF0434 family.

In Methylobacterium sp. (strain 4-46), this protein is UPF0434 protein M446_0487.